We begin with the raw amino-acid sequence, 666 residues long: DNA mismatch repair protein MutL (666 aa).

This sequence belongs to the DNA mismatch repair MutL/HexB family.

In terms of biological role, this protein is involved in the repair of mismatches in DNA. It is required for dam-dependent methyl-directed DNA mismatch repair. May act as a 'molecular matchmaker', a protein that promotes the formation of a stable complex between two or more DNA-binding proteins in an ATP-dependent manner without itself being part of a final effector complex. The polypeptide is DNA mismatch repair protein MutL (Clostridium botulinum (strain Kyoto / Type A2)).